The following is a 247-amino-acid chain: 3-deoxy-manno-octulosonate cytidylyltransferase (247 aa).

This sequence belongs to the KdsB family.

The protein localises to the cytoplasm. The enzyme catalyses 3-deoxy-alpha-D-manno-oct-2-ulosonate + CTP = CMP-3-deoxy-beta-D-manno-octulosonate + diphosphate. It functions in the pathway nucleotide-sugar biosynthesis; CMP-3-deoxy-D-manno-octulosonate biosynthesis; CMP-3-deoxy-D-manno-octulosonate from 3-deoxy-D-manno-octulosonate and CTP: step 1/1. The protein operates within bacterial outer membrane biogenesis; lipopolysaccharide biosynthesis. In terms of biological role, activates KDO (a required 8-carbon sugar) for incorporation into bacterial lipopolysaccharide in Gram-negative bacteria. This is 3-deoxy-manno-octulosonate cytidylyltransferase from Chlorobium phaeobacteroides (strain DSM 266 / SMG 266 / 2430).